The following is a 349-amino-acid chain: MKFSDIISKLEVTNHSLTQNPNNDPEITGMAAIDEATSANLSYIEGAKFASFIAQTNASALILPQNEAMQAQAQARGIVWMTTPEPRLLFAKAIALFYQPYTPTPEIHPTAVIHPTAKIGNDVYIGPHVVIQPGVEIGNGVIIHPNVVIYPYVKIGDRSILHANCTIEERSQIGADCIIHSGAVIGGEGFGFVPTRTGWYKMEQSGYVVLEDRVDIGCNTTIDRPSVGETRVGYDTKIDNLVQIAHGCQIGAGCAIAAQTGMAGGVKLGKRVILAGQVGIANQAKMGDGSTASAQTGILHDVKPGEVVSGTPAIPHKIYLKIGAIYSRLPEMYQAFRQLQRQSDKESKR.

His246 acts as the Proton acceptor in catalysis.

Belongs to the transferase hexapeptide repeat family. LpxD subfamily. In terms of assembly, homotrimer.

It catalyses the reaction a UDP-3-O-[(3R)-3-hydroxyacyl]-alpha-D-glucosamine + a (3R)-hydroxyacyl-[ACP] = a UDP-2-N,3-O-bis[(3R)-3-hydroxyacyl]-alpha-D-glucosamine + holo-[ACP] + H(+). It participates in bacterial outer membrane biogenesis; LPS lipid A biosynthesis. Its function is as follows. Catalyzes the N-acylation of UDP-3-O-acylglucosamine using 3-hydroxyacyl-ACP as the acyl donor. Is involved in the biosynthesis of lipid A, a phosphorylated glycolipid that anchors the lipopolysaccharide to the outer membrane of the cell. In Nostoc sp. (strain PCC 7120 / SAG 25.82 / UTEX 2576), this protein is UDP-3-O-acylglucosamine N-acyltransferase.